A 531-amino-acid polypeptide reads, in one-letter code: Retinoid isomerohydrolase (531 aa).

Cys112 carries the S-palmitoyl cysteine; in membrane form lipid modification. The Fe cation site is built by His180, His241, and His313. Cys329 carries S-palmitoyl cysteine; in membrane form lipidation. A Fe cation-binding site is contributed by His526.

The protein belongs to the carotenoid oxygenase family. Fe(2+) is required as a cofactor. In terms of processing, palmitoylated. In terms of tissue distribution, retinal pigment epithelium-specific.

The protein localises to the cytoplasm. Its subcellular location is the cell membrane. The catalysed reaction is an all-trans-retinyl ester + H2O = 11-cis-retinol + a fatty acid + H(+). The enzyme catalyses lutein = (3R,3'S)-zeaxanthin. It catalyses the reaction all-trans-retinyl hexadecanoate + H2O = 11-cis-retinol + hexadecanoate + H(+). Its function is as follows. Plays important roles in the production of 11-cis retinal and in visual pigment regeneration. Capable of catalyzing the isomerization of lutein to meso-zeaxanthin an eye-specific carotenoid. This is Retinoid isomerohydrolase (rpe65a) from Danio rerio (Zebrafish).